The chain runs to 123 residues: Diacylglycerol kinase (123 aa).

The helical transmembrane segment at 15 to 32 (ILNATGYSLAGFLAAFRG) threads the bilayer. Residue Glu33 participates in a divalent metal cation binding. 3 consecutive transmembrane segments (helical) span residues 35–55 (AFRQ…LLDV), 61–81 (ALMI…SAIE), and 102–122 (GSAA…TILL). The Proton acceptor role is filled by Glu74. Residue Glu81 participates in a divalent metal cation binding.

It belongs to the bacterial diacylglycerol kinase family. The cofactor is Mg(2+).

Its subcellular location is the cell inner membrane. It catalyses the reaction a 1,2-diacyl-sn-glycerol + ATP = a 1,2-diacyl-sn-glycero-3-phosphate + ADP + H(+). In terms of biological role, catalyzes the ATP-dependent phosphorylation of sn-l,2-diacylglycerol (DAG) to phosphatidic acid. Involved in the recycling of diacylglycerol produced as a by-product during membrane-derived oligosaccharide (MDO) biosynthesis. This is Diacylglycerol kinase (dgkA) from Pseudomonas aeruginosa (strain ATCC 15692 / DSM 22644 / CIP 104116 / JCM 14847 / LMG 12228 / 1C / PRS 101 / PAO1).